The sequence spans 343 residues: Dihydroorotase (343 aa).

2 residues coordinate Zn(2+): His14 and His16. Residues His16–Arg18 and Asn42 each bind substrate. Positions 99, 136, and 174 each coordinate Zn(2+). The residue at position 99 (Lys99) is an N6-carboxylysine. Residue His136 participates in substrate binding. Substrate is bound at residue Leu219. A Zn(2+)-binding site is contributed by Asp247. Residue Asp247 is part of the active site. Substrate is bound by residues His251 and Ala263.

It belongs to the metallo-dependent hydrolases superfamily. DHOase family. Class II DHOase subfamily. As to quaternary structure, homodimer. The cofactor is Zn(2+).

It catalyses the reaction (S)-dihydroorotate + H2O = N-carbamoyl-L-aspartate + H(+). It functions in the pathway pyrimidine metabolism; UMP biosynthesis via de novo pathway; (S)-dihydroorotate from bicarbonate: step 3/3. In terms of biological role, catalyzes the reversible cyclization of carbamoyl aspartate to dihydroorotate. The chain is Dihydroorotase from Psychromonas ingrahamii (strain DSM 17664 / CCUG 51855 / 37).